Here is a 310-residue protein sequence, read N- to C-terminus: Beta-ketoacyl-[acyl-carrier-protein] synthase III 1 (310 aa).

Residues C112 and H235 contribute to the active site. The interval Q236–R240 is ACP-binding. N265 is an active-site residue.

It belongs to the thiolase-like superfamily. FabH family. Homodimer.

Its subcellular location is the cytoplasm. It carries out the reaction malonyl-[ACP] + acetyl-CoA + H(+) = 3-oxobutanoyl-[ACP] + CO2 + CoA. The protein operates within lipid metabolism; fatty acid biosynthesis. Catalyzes the condensation reaction of fatty acid synthesis by the addition to an acyl acceptor of two carbons from malonyl-ACP. Catalyzes the first condensation reaction which initiates fatty acid synthesis and may therefore play a role in governing the total rate of fatty acid production. Possesses both acetoacetyl-ACP synthase and acetyl transacylase activities. Its substrate specificity determines the biosynthesis of branched-chain and/or straight-chain of fatty acids. The protein is Beta-ketoacyl-[acyl-carrier-protein] synthase III 1 of Bacillus anthracis.